We begin with the raw amino-acid sequence, 488 residues long: 3-octaprenyl-4-hydroxybenzoate carboxy-lyase (488 aa).

Asparagine 172 is a Mn(2+) binding site. Prenylated FMN contacts are provided by residues 175-177 (IYR), 189-191 (RWL), and 194-195 (RG). Glutamate 238 serves as a coordination point for Mn(2+). Catalysis depends on aspartate 287, which acts as the Proton donor.

The protein belongs to the UbiD family. As to quaternary structure, homohexamer. Prenylated FMN is required as a cofactor. Mn(2+) serves as cofactor.

The protein localises to the cell membrane. The enzyme catalyses a 4-hydroxy-3-(all-trans-polyprenyl)benzoate + H(+) = a 2-(all-trans-polyprenyl)phenol + CO2. The protein operates within cofactor biosynthesis; ubiquinone biosynthesis. Its function is as follows. Catalyzes the decarboxylation of 3-octaprenyl-4-hydroxy benzoate to 2-octaprenylphenol, an intermediate step in ubiquinone biosynthesis. This Hahella chejuensis (strain KCTC 2396) protein is 3-octaprenyl-4-hydroxybenzoate carboxy-lyase.